Reading from the N-terminus, the 207-residue chain is Large ribosomal subunit protein uL4 (207 aa).

The interval 50–76 (KTKTVSEVSGTTKKPFKQKGTGNARQG) is disordered.

The protein belongs to the universal ribosomal protein uL4 family. In terms of assembly, part of the 50S ribosomal subunit.

Its function is as follows. One of the primary rRNA binding proteins, this protein initially binds near the 5'-end of the 23S rRNA. It is important during the early stages of 50S assembly. It makes multiple contacts with different domains of the 23S rRNA in the assembled 50S subunit and ribosome. Forms part of the polypeptide exit tunnel. This is Large ribosomal subunit protein uL4 from Rickettsia canadensis (strain McKiel).